Reading from the N-terminus, the 416-residue chain is Probable protein phosphatase 2C 75 (416 aa).

Disordered stretches follow at residues 1 to 20 (MTEIYRTISTGRGDDVSPTK) and 32 to 51 (RRQAAVFGEPSSSRNRDRTD). Residues 108 to 411 (LYGIVSVMGR…DNISVVVIDL (304 aa)) enclose the PPM-type phosphatase domain. Positions 149, 150, 337, and 402 each coordinate Mn(2+).

Belongs to the PP2C family. Requires Mg(2+) as cofactor. Mn(2+) serves as cofactor.

It carries out the reaction O-phospho-L-seryl-[protein] + H2O = L-seryl-[protein] + phosphate. The catalysed reaction is O-phospho-L-threonyl-[protein] + H2O = L-threonyl-[protein] + phosphate. In terms of biological role, negative regulator of abscisic acid (ABA) responses during seed germination. This Arabidopsis thaliana (Mouse-ear cress) protein is Probable protein phosphatase 2C 75 (AHG1).